Consider the following 177-residue polypeptide: Large ribosomal subunit protein uL6 (177 aa).

The interval Pro-154–Lys-177 is disordered. Basic and acidic residues predominate over residues Glu-155–Arg-171.

This sequence belongs to the universal ribosomal protein uL6 family. As to quaternary structure, part of the 50S ribosomal subunit.

Functionally, this protein binds to the 23S rRNA, and is important in its secondary structure. It is located near the subunit interface in the base of the L7/L12 stalk, and near the tRNA binding site of the peptidyltransferase center. The polypeptide is Large ribosomal subunit protein uL6 (Alcanivorax borkumensis (strain ATCC 700651 / DSM 11573 / NCIMB 13689 / SK2)).